Reading from the N-terminus, the 647-residue chain is Zinc transporter ZIP4 (647 aa).

The first 22 residues, 1-22 (MASLVSLELGLLLAVLVVTATA), serve as a signal peptide directing secretion. The Extracellular portion of the chain corresponds to 23-327 (SPPAGLLSLL…QDQLSQSERY (305 aa)). 3 cysteine pairs are disulfide-bonded: cysteine 57/cysteine 62, cysteine 65/cysteine 111, and cysteine 160/cysteine 195. Positions 236-255 (EAHSDHSHRHRGASSRDPVP) are disordered. Residue asparagine 261 is glycosylated (N-linked (GlcNAc...) asparagine). Cysteine 270 and cysteine 309 are joined by a disulfide. The chain crosses the membrane as a helical span at residues 328-348 (LYGSLATLLICLCAVFGLLLL). At 349–359 (TCTGCRGVTHY) the chain is on the cytoplasmic side. Residues 360 to 380 (ILQTFLSLAVGAVTGDAVLHL) traverse the membrane as a helical segment. Topologically, residues 381–402 (TPKVLGLHTHSEEGLSPQPTWR) are extracellular. Residues 403–423 (LLAMLAGLYAFFLFENLFNLL) traverse the membrane as a helical segment. The Cytoplasmic portion of the chain corresponds to 424–498 (LPRDPEDLED…LSPELRLLPY (75 aa)). An Essential for SLC39A4 endocytosis motif is present at residues 452-454 (LQL). Residues 458–484 (ELRQPKPPHEGSRADLVAEESPELLNP) form a disordered region. The span at 460–470 (RQPKPPHEGSR) shows a compositional bias: basic and acidic residues. The helical transmembrane segment at 499–518 (MITLGDAVHNFADGLAVGAA) threads the bilayer. Zn(2+) contacts are provided by histidine 507, asparagine 508, and aspartate 511. At 519 to 526 (FASSWKTG) the chain is on the extracellular side. A helical membrane pass occupies residues 527–553 (LATSLAVFCHELPHELGDFAALLHAGL). Residues histidine 536, glutamate 537, and histidine 540 each coordinate Zn(2+). The Cytoplasmic segment spans residues 554 to 558 (SVRQA). The helical transmembrane segment at 559-579 (LLLNLASALTAFAGLYVALAV) threads the bilayer. Over 580-586 (GVSEESE) the chain is Extracellular. A helical membrane pass occupies residues 587 to 607 (AWILAVATGLFLYVALCDMLP). Over 608–617 (AMLKVRDPRP) the chain is Cytoplasmic. A helical membrane pass occupies residues 618 to 638 (WLLFLLHNVGLLGGWTVLLLL). At 639–647 (SLYEDDITF) the chain is on the extracellular side.

This sequence belongs to the ZIP transporter (TC 2.A.5) family. Homodimer; homodimerization is mediated by the transmembrane domain. In terms of processing, the extracellular N-terminal ectodomain is cleaved when cells are Zn(2+) deficient, N-terminally cleaved SLC39A4 is internalized at a faster rate. Under excess Zn(2+) conditions, SLC39A4 on the cell surface is rapidly endocytosed, ubiquitinated and degraded. Post-translationally, glycosylated. In terms of tissue distribution, highly expressed in kidney, small intestine, stomach, colon, jejunum and duodenum.

It localises to the cell membrane. Its subcellular location is the recycling endosome membrane. The protein localises to the apical cell membrane. It carries out the reaction Zn(2+)(in) = Zn(2+)(out). The Zn(2+) uniporter activity is regulated by zinc availability. Extracellular acidification stimulated SLC39A4-dependent Zn(2+) uptake. Functionally, selective transporter that mediates the uptake of Zn(2+). Plays an essential role for dietary zinc uptake from small intestine. The Zn(2+) uniporter activity is regulated by zinc availability. Also exhibits polyspecific binding and transport of Cu(2+), Cd(2+) and possibly Ni(2+) but at higher concentrations. This Homo sapiens (Human) protein is Zinc transporter ZIP4.